A 330-amino-acid polypeptide reads, in one-letter code: Short chain dehydrogenase macD (330 aa).

NADP(+)-binding residues include K57, D86, N113, Y204, and K208. Y204 (proton donor) is an active-site residue. K208 serves as the catalytic Lowers pKa of active site Tyr.

Belongs to the short-chain dehydrogenases/reductases (SDR) family.

It participates in secondary metabolite biosynthesis; terpenoid biosynthesis. Functionally, short chain dehydrogenase; part of the gene cluster that mediates the biosynthesis of macrophorins, isoprenoid epoxycyclohexenones containing cyclized drimane moieties. The first step of the pathway is the synthesis of 6-methylsalicylic acid (6-MSA) by the polyketide synthase macA. 6-MSA is then converted to m-cresol by the decarboxylase macB. The cytochrome P450 monooxygenase macC then catalyzes the oxidation of m-cresol to toluquinol. Epoxidation of toluquinol is then performed by the short chain dehydrogenase macD, with the help of macE, and a further prenylation by macG leads to 7-deacetoxyyanuthone A. The next step is the hydroxylation of C-22 of 7-deacetoxyyanuthone A by the cytochrome P450 monooxygenase macH to yield 22-deacetylyanuthone A. O-Mevalon transferase macI then attaches mevalon to the hydroxyl group of 22-deacetylyanuthone A to produce yanuthone E. The terpene cyclase macJ catalyzes the cyclization of 22-deacetylyanuthone A to macrophorin A. MacJ is also able to catalyze cyclization of yanuthone E and 7-deacetoxyyanuthone A to their corresponding macrophorins. The macJ products can be further modified by macH and macJ, as well as by the FAD-dependent monooxygenase macF, to produce additional macrophorins, including 4'-oxomacrophorin A, 4'-oxomacrophorin D and 4'-oxomacrophorin E. This Penicillium terrestre protein is Short chain dehydrogenase macD.